A 237-amino-acid polypeptide reads, in one-letter code: Large ribosomal subunit protein uL2 (237 aa).

A disordered region spans residues 202–237 (FGGGNRKHPGKPTTVSRNAPPGRKVGHIAARRTGKR). A compositionally biased stretch (basic residues) spans 225–237 (KVGHIAARRTGKR).

The protein belongs to the universal ribosomal protein uL2 family. In terms of assembly, part of the 50S ribosomal subunit. Forms a bridge to the 30S subunit in the 70S ribosome.

In terms of biological role, one of the primary rRNA binding proteins. Required for association of the 30S and 50S subunits to form the 70S ribosome, for tRNA binding and peptide bond formation. It has been suggested to have peptidyltransferase activity; this is somewhat controversial. Makes several contacts with the 16S rRNA in the 70S ribosome. This Methanococcoides burtonii (strain DSM 6242 / NBRC 107633 / OCM 468 / ACE-M) protein is Large ribosomal subunit protein uL2.